The following is a 513-amino-acid chain: ATP synthase subunit alpha (513 aa).

169–176 (GDRQTGKT) contacts ATP.

The protein belongs to the ATPase alpha/beta chains family. As to quaternary structure, F-type ATPases have 2 components, CF(1) - the catalytic core - and CF(0) - the membrane proton channel. CF(1) has five subunits: alpha(3), beta(3), gamma(1), delta(1), epsilon(1). CF(0) has three main subunits: a(1), b(2) and c(9-12). The alpha and beta chains form an alternating ring which encloses part of the gamma chain. CF(1) is attached to CF(0) by a central stalk formed by the gamma and epsilon chains, while a peripheral stalk is formed by the delta and b chains.

It is found in the cell inner membrane. It carries out the reaction ATP + H2O + 4 H(+)(in) = ADP + phosphate + 5 H(+)(out). Functionally, produces ATP from ADP in the presence of a proton gradient across the membrane. The alpha chain is a regulatory subunit. This chain is ATP synthase subunit alpha, found in Yersinia enterocolitica serotype O:8 / biotype 1B (strain NCTC 13174 / 8081).